Here is a 437-residue protein sequence, read N- to C-terminus: Methylenetetrahydrofolate--tRNA-(uracil-5-)-methyltransferase TrmFO (437 aa).

Residue 8–13 (GAGLAG) participates in FAD binding.

Belongs to the MnmG family. TrmFO subfamily. Requires FAD as cofactor.

Its subcellular location is the cytoplasm. It catalyses the reaction uridine(54) in tRNA + (6R)-5,10-methylene-5,6,7,8-tetrahydrofolate + NADH + H(+) = 5-methyluridine(54) in tRNA + (6S)-5,6,7,8-tetrahydrofolate + NAD(+). The catalysed reaction is uridine(54) in tRNA + (6R)-5,10-methylene-5,6,7,8-tetrahydrofolate + NADPH + H(+) = 5-methyluridine(54) in tRNA + (6S)-5,6,7,8-tetrahydrofolate + NADP(+). Catalyzes the folate-dependent formation of 5-methyl-uridine at position 54 (M-5-U54) in all tRNAs. The sequence is that of Methylenetetrahydrofolate--tRNA-(uracil-5-)-methyltransferase TrmFO from Desulfitobacterium hafniense (strain Y51).